Consider the following 704-residue polypeptide: Tryptophan synthase (704 aa).

Residues 1–292 are tryptophan synthase alpha chain; sequence MEAIKKVFEQ…QLTPNAETAK (292 aa). Residues E49 and D60 each act as proton acceptor in the active site. The segment at 293–704 is tryptophan synthase beta chain; that stretch reads GVENILPARF…HVSSNAIPSK (412 aa). K380 is modified (N6-(pyridoxal phosphate)lysine).

This sequence in the N-terminal section; belongs to the TrpA family. It in the C-terminal section; belongs to the TrpB family. The cofactor is pyridoxal 5'-phosphate.

It catalyses the reaction (1S,2R)-1-C-(indol-3-yl)glycerol 3-phosphate + L-serine = D-glyceraldehyde 3-phosphate + L-tryptophan + H2O. Its pathway is amino-acid biosynthesis; L-tryptophan biosynthesis; L-tryptophan from chorismate: step 5/5. The protein is Tryptophan synthase (TRP-1) of Coprinopsis cinerea (strain Okayama-7 / 130 / ATCC MYA-4618 / FGSC 9003) (Inky cap fungus).